The primary structure comprises 523 residues: Pentatricopeptide repeat-containing protein At1g52640, mitochondrial (523 aa).

Residues 1–5 constitute a mitochondrion transit peptide; that stretch reads MAIRT. PPR repeat units follow at residues 101–135, 137–171, 172–206, 207–241, 242–276, 277–311, 312–346, 347–381, 382–416, and 417–452; these read SLESYHILVEILGSSKQFALLWDFLIEAREYNYFE, SSKVFWIVFRAYSRANLPSEACRAFNRMVEFGIKP, CVDDLDQLLHSLCDKKHVNHAQEFFGKAKGFGIVP, SAKTYSILVRGWARIRDASGARKVFDEMLERNCVV, DLLAYNALLDALCKSGDVDGGYKMFQEMGNLGLKP, DAYSFAIFIHAYCDAGDVHSAYKVLDRMKRYDLVP, NVYTFNHIIKTLCKNEKVDDAYLLLDEMIQKGANP, DTWTYNSIMAYHCDHCEVNRATKLLSRMDRTKCLP, DRHTYNMVLKLLIRIGRFDRATEIWEGMSERKFYP, and TVATYTVMIHGLVRKKGKLEEACRYFEMMIDEGIPP. The disordered stretch occupies residues 498 to 523; that stretch reads KRRRLGRRSENSEDDDDDFELERDTI. Positions 509 to 523 are enriched in acidic residues; it reads SEDDDDDFELERDTI.

Belongs to the PPR family. P subfamily.

The protein resides in the mitochondrion. In Arabidopsis thaliana (Mouse-ear cress), this protein is Pentatricopeptide repeat-containing protein At1g52640, mitochondrial.